Here is a 325-residue protein sequence, read N- to C-terminus: Diacylglycerol acyltransferase/mycolyltransferase Ag85B (325 aa).

A signal peptide spans 1 to 40; the sequence is MTDVSRKIRAWGRRLMIGTAAAVVLPGLVGLAGGAATAGA. 82–83 lines the substrate pocket; that stretch reads LR. The tract at residues 98-108 is fibronectin-binding; sequence FEWYYQSGLSI. An intrachain disulfide couples Cys-127 to Cys-132. Residues Ser-166 and Asp-194 each contribute to the substrate site. Residue Ser-166 is the Nucleophile of the active site. Residue Glu-270 is part of the active site. Substrate is bound by residues 272 to 275, Lys-279, and 302 to 304; these read FVRS and HSW. His-302 is an active-site residue.

It belongs to the mycobacterial A85 antigen family.

It localises to the secreted. It carries out the reaction 2 alpha,alpha'-trehalose 6-mycolate = alpha,alpha'-trehalose 6,6'-bismycolate + alpha,alpha-trehalose. The enzyme catalyses an acyl-CoA + a 1,2-diacyl-sn-glycerol = a triacyl-sn-glycerol + CoA. Functionally, the antigen 85 proteins (FbpA, FbpB, FbpC) are responsible for the high affinity of mycobacteria for fibronectin, a large adhesive glycoprotein, which facilitates the attachment of Mycobacteria to murine alveolar macrophages (AMs). They also help to maintain the integrity of the cell wall by catalyzing the transfer of mycolic acids to cell wall arabinogalactan and through the synthesis of alpha,alpha-trehalose dimycolate (TDM, cord factor). They catalyze the transfer of a mycoloyl residue from one molecule of alpha,alpha-trehalose monomycolate (TMM) to another TMM, leading to the formation of TDM. The polypeptide is Diacylglycerol acyltransferase/mycolyltransferase Ag85B (fbpB) (Mycobacterium bovis (strain BCG / Pasteur 1173P2)).